A 392-amino-acid polypeptide reads, in one-letter code: NAD(P)H-quinone oxidoreductase subunit H (392 aa).

Belongs to the complex I 49 kDa subunit family. As to quaternary structure, NDH-1 can be composed of about 15 different subunits; different subcomplexes with different compositions have been identified which probably have different functions.

It localises to the cellular thylakoid membrane. It catalyses the reaction a plastoquinone + NADH + (n+1) H(+)(in) = a plastoquinol + NAD(+) + n H(+)(out). The enzyme catalyses a plastoquinone + NADPH + (n+1) H(+)(in) = a plastoquinol + NADP(+) + n H(+)(out). NDH-1 shuttles electrons from an unknown electron donor, via FMN and iron-sulfur (Fe-S) centers, to quinones in the respiratory and/or the photosynthetic chain. The immediate electron acceptor for the enzyme in this species is believed to be plastoquinone. Couples the redox reaction to proton translocation, and thus conserves the redox energy in a proton gradient. Cyanobacterial NDH-1 also plays a role in inorganic carbon-concentration. This chain is NAD(P)H-quinone oxidoreductase subunit H, found in Synechococcus sp. (strain JA-2-3B'a(2-13)) (Cyanobacteria bacterium Yellowstone B-Prime).